The chain runs to 243 residues: Probable transcriptional regulatory protein Bpet3099 (243 aa).

Positions 1 to 21 are disordered; the sequence is MAGHSKWANIQHRKGRQDAKR.

The protein belongs to the TACO1 family.

The protein resides in the cytoplasm. The protein is Probable transcriptional regulatory protein Bpet3099 of Bordetella petrii (strain ATCC BAA-461 / DSM 12804 / CCUG 43448).